A 247-amino-acid chain; its full sequence is Suppressor of silencing P0 (247 aa).

An F-box-like domain is found at 76 to 95; that stretch reads LPRHLHYECLEWGLLCGTHP.

This sequence belongs to the polerovirus P0 protein family.

Functionally, suppressor of RNA-mediated gene silencing, also known as post-transcriptional gene silencing (PTGS), a mechanism of plant viral defense that limits the accumulation of viral RNAs. The P0 protein suppresses local PTGS using its F-box-like domain to mediate destabilization and degradation of the AGO1 protein, although not via an interaction with host SKP1A. Participates, together with the proteins P1 and P7, in the inhibition of the induction of aphid-induced host phytohormones. This could play a role in the attraction to the infected plants by aphids. This is Suppressor of silencing P0 from Potato leafroll virus (strain Potato/Netherlands/Wageningen/1989) (PLrV).